A 569-amino-acid chain; its full sequence is Falcipain-1 (569 aa).

Over 1–35 (MVAIKEMKEFAFARPSLVETLNKKKKFLKKKEKRT) the chain is Cytoplasmic. Positions 1-332 (MVAIKEMKEF…KRNEKDIFSK (332 aa)) are cleaved as a propeptide — activation peptide. Residues 36–56 (FVLSIYAFITFIIFCIGILYF) traverse the membrane as a helical; Signal-anchor for type II membrane protein segment. Residues 57-569 (TNKSSAHNNN…IGEEVFYPIL (513 aa)) lie on the Lumenal side of the membrane. Asn58, Asn98, Asn121, and Asn127 each carry an N-linked (GlcNAc...) asparagine glycan. Residues 97 to 118 (LNESSNEEDEEKYTLNSETYNN) are disordered. Disulfide bonds link Cys354–Cys395, Cys388–Cys428, and Cys413–Cys433. Cys357 is a catalytic residue. Residues Asn479 and Asn487 are each glycosylated (N-linked (GlcNAc...) asparagine). Cys482 and Cys558 are joined by a disulfide. Catalysis depends on residues His488 and Asn533.

Belongs to the peptidase C1 family. In terms of processing, contains disulfide bonds.

The protein resides in the membrane. The protein localises to the cytoplasmic granule. Cysteine protease. In the mosquito midgut, required for parasite development. The protein is Falcipain-1 of Plasmodium falciparum (isolate 3D7).